The chain runs to 509 residues: Maturase K (509 aa).

This sequence belongs to the intron maturase 2 family. MatK subfamily.

The protein resides in the plastid. The protein localises to the chloroplast. Usually encoded in the trnK tRNA gene intron. Probably assists in splicing its own and other chloroplast group II introns. The polypeptide is Maturase K (Amentotaxus argotaenia (Chinese flowering yew)).